The sequence spans 305 residues: Oxygen-dependent coproporphyrinogen-III oxidase (305 aa).

Ser-92 contacts substrate. 2 residues coordinate a divalent metal cation: His-96 and His-106. The active-site Proton donor is His-106. 108–110 (NVR) lines the substrate pocket. Residues His-145 and His-175 each contribute to the a divalent metal cation site. Residues 239–274 (YVEFNLLFDRGTLFGLQSGGRAESILISLPPLVRWE) are important for dimerization. 257–259 (GGR) contributes to the substrate binding site.

This sequence belongs to the aerobic coproporphyrinogen-III oxidase family. As to quaternary structure, homodimer. It depends on a divalent metal cation as a cofactor.

It is found in the cytoplasm. The enzyme catalyses coproporphyrinogen III + O2 + 2 H(+) = protoporphyrinogen IX + 2 CO2 + 2 H2O. It functions in the pathway porphyrin-containing compound metabolism; protoporphyrin-IX biosynthesis; protoporphyrinogen-IX from coproporphyrinogen-III (O2 route): step 1/1. In terms of biological role, involved in the heme biosynthesis. Catalyzes the aerobic oxidative decarboxylation of propionate groups of rings A and B of coproporphyrinogen-III to yield the vinyl groups in protoporphyrinogen-IX. In Xylella fastidiosa (strain M12), this protein is Oxygen-dependent coproporphyrinogen-III oxidase.